The chain runs to 443 residues: Oxygen-dependent coproporphyrinogen-III oxidase, mitochondrial (443 aa).

Residues 1-98 (MALRLGRLGS…EMVPKSSGAR (98 aa)) constitute a mitochondrion transit peptide. The disordered stretch occupies residues 89 to 112 (EMVPKSSGARSPSPGRREEDGDEL). Position 101 is a phosphoserine (Ser-101). The span at 103–112 (GRREEDGDEL) shows a compositional bias: basic and acidic residues. The tract at residues 182 to 191 (VLQDGRVFEK) is important for dimerization. Ser-233 is a coproporphyrinogen III binding site. His-247 serves as the catalytic Proton donor. A coproporphyrinogen III-binding site is contributed by 249-251 (NYR). The tract at residues 381 to 417 (YVEFNLLYDRGTKFGLFTPGSRIESILMSLPLTARWE) is important for dimerization. Lys-393 is subject to N6-acetyllysine; alternate. At Lys-393 the chain carries N6-succinyllysine; alternate. 400–402 (GSR) provides a ligand contact to coproporphyrinogen III.

Belongs to the aerobic coproporphyrinogen-III oxidase family. Homodimer. As to expression, expressed in erythroid cells. Expressed in liver.

It is found in the mitochondrion intermembrane space. It catalyses the reaction coproporphyrinogen III + O2 + 2 H(+) = protoporphyrinogen IX + 2 CO2 + 2 H2O. Its pathway is porphyrin-containing compound metabolism; protoporphyrin-IX biosynthesis; protoporphyrinogen-IX from coproporphyrinogen-III (O2 route): step 1/1. Functionally, involved in the heme biosynthesis. Catalyzes the aerobic oxidative decarboxylation of propionate groups of rings A and B of coproporphyrinogen-III to yield the vinyl groups in protoporphyrinogen-IX. The sequence is that of Oxygen-dependent coproporphyrinogen-III oxidase, mitochondrial (Cpox) from Mus musculus (Mouse).